The chain runs to 191 residues: MSQDQVLDIFRNSEALLEGHFRLTSGRHSNRYVQCAQVLQHPPYTERLSRHLAALLRKGVGLPDVVIGPAMGGILVAYEVGRALGVRAIFTEREKGLMTLRRNFVVRPGETVVVCEDVVTTGGSVREVIDVATAAGGRVAAVAALVDRSNGQVDFGVPFFAALSMEVLSWPPEECPLCKEGTPAIKPGSRT.

116 to 124 (EDVVTTGGS) lines the 5-phospho-alpha-D-ribose 1-diphosphate pocket. Positions 120 and 148 each coordinate orotate.

Belongs to the purine/pyrimidine phosphoribosyltransferase family. PyrE subfamily. As to quaternary structure, homodimer. The cofactor is Mg(2+).

The catalysed reaction is orotidine 5'-phosphate + diphosphate = orotate + 5-phospho-alpha-D-ribose 1-diphosphate. It functions in the pathway pyrimidine metabolism; UMP biosynthesis via de novo pathway; UMP from orotate: step 1/2. Catalyzes the transfer of a ribosyl phosphate group from 5-phosphoribose 1-diphosphate to orotate, leading to the formation of orotidine monophosphate (OMP). This Heliobacterium modesticaldum (strain ATCC 51547 / Ice1) protein is Orotate phosphoribosyltransferase.